The following is a 72-amino-acid chain: Translation initiation factor IF-1 (72 aa).

An S1-like domain is found at 1–72; it reads MTKEDCIEMQ…SKGRIIFRSR (72 aa).

Belongs to the IF-1 family. Component of the 30S ribosomal translation pre-initiation complex which assembles on the 30S ribosome in the order IF-2 and IF-3, IF-1 and N-formylmethionyl-tRNA(fMet); mRNA recruitment can occur at any time during PIC assembly.

The protein resides in the cytoplasm. Functionally, one of the essential components for the initiation of protein synthesis. Stabilizes the binding of IF-2 and IF-3 on the 30S subunit to which N-formylmethionyl-tRNA(fMet) subsequently binds. Helps modulate mRNA selection, yielding the 30S pre-initiation complex (PIC). Upon addition of the 50S ribosomal subunit IF-1, IF-2 and IF-3 are released leaving the mature 70S translation initiation complex. The chain is Translation initiation factor IF-1 from Buchnera aphidicola subsp. Baizongia pistaciae (strain Bp).